The sequence spans 253 residues: Glutamate racemase (253 aa).

Residues 7–8 and 39–40 contribute to the substrate site; these read DS and YG. The active-site Proton donor/acceptor is Cys70. Residue 71–72 coordinates substrate; sequence NT. Catalysis depends on Cys180, which acts as the Proton donor/acceptor. 181 to 182 contacts substrate; the sequence is TH.

Belongs to the aspartate/glutamate racemases family.

It catalyses the reaction L-glutamate = D-glutamate. It participates in cell wall biogenesis; peptidoglycan biosynthesis. Functionally, provides the (R)-glutamate required for cell wall biosynthesis. In Halothermothrix orenii (strain H 168 / OCM 544 / DSM 9562), this protein is Glutamate racemase.